Reading from the N-terminus, the 868-residue chain is Spindle and centriole-associated protein 1 (868 aa).

Disordered regions lie at residues 129–154 (RTGF…DPGT), 172–201 (DDGG…HSNR), 229–250 (IAAQ…AEDQ), and 291–326 (KPLL…LASS). Composition is skewed to polar residues over residues 190–200 (ELPNSLSPHSN) and 229–245 (IAAQ…SSEL). Thr-236 carries the post-translational modification Phosphothreonine. Ser-240 is subject to Phosphoserine. Residues 315 to 326 (SSSTTSADLASS) are compositionally biased toward low complexity. Residues 381–434 (RYLKESETQLRKEVETRQQLEQMLGDHRELIDALTAEILLLREENGAVQARLQQ) adopt a coiled-coil conformation. 2 disordered regions span residues 630 to 664 (PQFV…LGDG) and 702 to 722 (SSGG…NASE). Low complexity predominate over residues 634 to 649 (SLSQPPCSSPPSTQQS). Phosphoserine is present on Ser-655. Basic and acidic residues predominate over residues 706 to 715 (EHGDGLREPS). Positions 736 to 764 (SSMEERIAELNRQSMEARSKLLQLIEQQK) form a coiled coil. Phosphoserine occurs at positions 772, 773, 776, and 831. The disordered stretch occupies residues 805-868 (SSKCNTVSPV…GWFALSAHLP (64 aa)). Over residues 812–831 (SPVSGVSSRRSSGAISNSCS) the composition is skewed to low complexity.

As to quaternary structure, interacts with CEP120.

The protein resides in the cytoplasm. The protein localises to the cytoskeleton. It localises to the microtubule organizing center. Its subcellular location is the centrosome. It is found in the centriole. The protein resides in the spindle. Its function is as follows. Regulator required for centriole duplication, for proper bipolar spindle formation and chromosome congression in mitosis. The sequence is that of Spindle and centriole-associated protein 1 (Spice1) from Rattus norvegicus (Rat).